We begin with the raw amino-acid sequence, 402 residues long: Advanced glycosylation end product-specific receptor (402 aa).

The first 22 residues, 1 to 22 (MPAGTAARAWVLVLALWGAVAG), serve as a signal peptide directing secretion. The region spanning 23–109 (GQNITARIGE…ATNRRGKEVK (87 aa)) is the Ig-like V-type domain. The Extracellular segment spans residues 23–340 (GQNITARIGE…VGESGLGTLA (318 aa)). N-linked (GlcNAc...) asparagine glycans are attached at residues Asn-25 and Asn-80. 2 cysteine pairs are disulfide-bonded: Cys-38–Cys-98 and Cys-143–Cys-206. Ig-like C2-type domains lie at 123 to 219 (PEIV…RPLN) and 233 to 315 (PEGI…PPVS). The segment at 295–332 (GTYSCVATHPSHGPQESPPVSIRVTETGDEGPAEGSVG) is disordered. A helical membrane pass occupies residues 341–361 (LALGILGGLGVVALLVGAILW). The Cytoplasmic segment spans residues 362-402 (RKRQPRREERKAPESQEDEEERAELNQSEEAEMPENGAGGP). Positions 365–402 (QPRREERKAPESQEDEEERAELNQSEEAEMPENGAGGP) are disordered. Ser-376 and Ser-389 each carry phosphoserine; by ATM. Residues 376–394 (SQEDEEERAELNQSEEAEM) are compositionally biased toward acidic residues.

As to quaternary structure, constitutive homodimer; disulfide-linked. Forms homooligomers. Interacts with S100A1 and APP. Interacts with S100B, S100A12 and S100A14. Interacts with TIRAP. Interacts with HMGB1. Interacts with LGP2; this interaction plays an important role in AGER-mediated pro-inflammatory responses and cytokine release. Interacts with double-strand break repair protein MRE11 which is a core component of the MRN complex; the interaction enhances MRE11 endonuclease activity and promotes DNA repair. Interacts with the MCM2-7 complex via interaction with complex member MCM2; the interaction is increased following DNA replication stress and stabilizes the MCM2-7 complex at replication forks. Post-translationally, phosphorylated on its cytoplasmic domain by PKCzeta/PRKCZ upon ligand binding. Phosphorylated by ATM following DNA damage. Targeted by the ubiquitin E3 ligase subunit FBXO10 to mediate its ubiquitination and degradation. Isoform 1: Expressed at higher levels in the coronary arterioles in type 2 diabetic mice (at protein level). Endothelial cells. Expressed in lung, kidney, brain and heart. Most prevalent isoform with the highest level in heart. Isoform 2: Expressed in brain, lung, kidney and small intestine with the highest level in lung. Expressed in brain, lung, kidney and small intestine with the highest level in small intestine (at protein level). Detected in neurons of the cerebrum, bronchial epithelium, endothelial cells, tubular cells of kidney and epithelial cells of small intestine (at protein level). Expression is increased in the kidney of diabetic wild-type mice (at protein level), but not in the other tissues. Expressed only in kidney. Expression is increased in the kidney of diabetic mice. Isoform 3: Expressed in lung, kidney and heart. The second most prevalent isoform with the highest level in lung. Not expressed in brain. Isoform 4: Expressed at very low level in lung only. Isoform 5: Expressed at very low level in lung only. Isoform 6: Expressed at very low level in lung only. Isoform 7: Expressed at very low level in heart only. Isoform 8: Expressed at very low level in lung only. Isoform 9: Expressed at very low level in heart only. Isoform 10: Expressed in lung, brain, heart and kidney with a very high level in kidney. Isoform 11: Expressed in brain, kidney and heart. Not expressed in lung. Isoform 12: Expressed at very low level in lung and kidney. Isoform 13: Expressed at very low level in lung only.

Its subcellular location is the cell membrane. It localises to the cell projection. It is found in the phagocytic cup. The protein resides in the early endosome. The protein localises to the nucleus. Its subcellular location is the secreted. Its function is as follows. Cell surface pattern recognition receptor that senses endogenous stress signals with a broad ligand repertoire including advanced glycation end products, S100 proteins, high-mobility group box 1 protein/HMGB1, amyloid beta/APP oligomers, nucleic acids, histones, phospholipids and glycosaminoglycans. Advanced glycosylation end products are nonenzymatically glycosylated proteins which accumulate in vascular tissue in aging and at an accelerated rate in diabetes. These ligands accumulate at inflammatory sites during the pathogenesis of various diseases including diabetes, vascular complications, neurodegenerative disorders and cancers, and RAGE transduces their binding into pro-inflammatory responses. Upon ligand binding, uses TIRAP and MYD88 as adapters to transduce the signal ultimately leading to the induction of inflammatory cytokines IL6, IL8 and TNFalpha through activation of NF-kappa-B. Interaction with S100A12 on endothelium, mononuclear phagocytes, and lymphocytes triggers cellular activation, with generation of key pro-inflammatory mediators. Interaction with S100B after myocardial infarction may play a role in myocyte apoptosis by activating ERK1/2 and p53/TP53 signaling. Contributes to the translocation of amyloid-beta peptide (ABPP) across the cell membrane from the extracellular to the intracellular space in cortical neurons. ABPP-initiated RAGE signaling, especially stimulation of p38 mitogen-activated protein kinase (MAPK), has the capacity to drive a transport system delivering ABPP as a complex with RAGE to the intraneuronal space. Participates in endothelial albumin transcytosis together with HMGB1 through the RAGE/SRC/Caveolin-1 pathway, leading to endothelial hyperpermeability. Mediates the loading of HMGB1 in extracellular vesicles (EVs) that shuttle HMGB1 to hepatocytes by transferrin-mediated endocytosis and subsequently promote hepatocyte pyroptosis by activating the NLRP3 inflammasome. Binds to DNA and promotes extracellular hypomethylated DNA (CpG DNA) uptake by cells via the endosomal route to activate inflammatory responses. Mediates phagocytosis by non-professional phagocytes (NPP) and this is enhanced by binding to ligands including RNA, DNA, HMGB1 and histones. Promotes NPP-mediated phagocytosis of Saccharomyces cerevisiae spores by binding to RNA attached to the spore wall. Also promotes NPP-mediated phagocytosis of apoptotic cells. Following DNA damage, recruited to DNA double-strand break sites where it colocalizes with the MRN repair complex via interaction with double-strand break repair protein MRE11. Enhances the endonuclease activity of MRE11, promoting the end resection of damaged DNA. Promotes DNA damage repair in trophoblasts which enhances trophoblast invasion and contributes to placental development and maintenance. Protects cells from DNA replication stress by localizing to damaged replication forks where it stabilizes the MCM2-7 complex and promotes faithful progression of the replication fork. Is able to advanced glycosylation end product (AGE)-induce nuclear factor NF-kappa-B activation. Functionally, down-regulates receptor for advanced glycosylation end products (RAGE)-ligand induced signaling through various MAPK pathways including ERK1/2, p38 and SAPK/JNK. Significantly affects tumor cell properties through decreasing cell migration, invasion, adhesion and proliferation, and increasing cellular apoptosis. Exhibits drastic inhibition on tumorigenesis in vitro. The sequence is that of Advanced glycosylation end product-specific receptor (Ager) from Mus musculus (Mouse).